Consider the following 213-residue polypeptide: Octanoyltransferase (213 aa).

Residues 32-207 form the BPL/LPL catalytic domain; that stretch reads DSTLDEIWLV…NILALLNNPD (176 aa). Substrate contacts are provided by residues 71-78, 138-140, and 151-153; these read RGGQVTYH, SLG, and GLA. Residue Cys-169 is the Acyl-thioester intermediate of the active site.

The protein belongs to the LipB family.

Its subcellular location is the cytoplasm. The enzyme catalyses octanoyl-[ACP] + L-lysyl-[protein] = N(6)-octanoyl-L-lysyl-[protein] + holo-[ACP] + H(+). Its pathway is protein modification; protein lipoylation via endogenous pathway; protein N(6)-(lipoyl)lysine from octanoyl-[acyl-carrier-protein]: step 1/2. In terms of biological role, catalyzes the transfer of endogenously produced octanoic acid from octanoyl-acyl-carrier-protein onto the lipoyl domains of lipoate-dependent enzymes. Lipoyl-ACP can also act as a substrate although octanoyl-ACP is likely to be the physiological substrate. In Escherichia coli O8 (strain IAI1), this protein is Octanoyltransferase.